We begin with the raw amino-acid sequence, 359 residues long: Mitochondrial glutathione transporter SLC25A39 (359 aa).

At 1–18 the chain is on the mitochondrial intermembrane side; the sequence is MGDRPAVRISAAITPVQQ. Solcar repeat units follow at residues 13–149, 157–241, and 251–346; these read ITPV…LRDF, HGDH…VKAQ, and ASFT…GKTF. Residues 19 to 39 form a helical membrane-spanning segment; the sequence is MLASGTGAVLTSLFVTPLDVV. The Mitochondrial matrix segment spans residues 40–119; it reads KIRLQAQQTP…VKITHNEGLR (80 aa). Residues Cys72, Cys76, Cys86, and Cys92 each coordinate [2Fe-2S] cluster. Residues 120–140 form a helical membrane-spanning segment; that stretch reads SLWSGLPPTLVMAVPATVIYF. The Mitochondrial intermembrane portion of the chain corresponds to 141–162; that stretch reads TCYDQLRDFLCYSMGYHGDHIP. A helical membrane pass occupies residues 163–183; it reads LIAGGLARLGAVSVISPLELV. The Mitochondrial matrix segment spans residues 184 to 212; sequence RTKMQSRRLQYSELMVCIRSSVAQDGWLS. A helical membrane pass occupies residues 213–233; that stretch reads LWRGWGPTVLRDVPFSALYWF. At 234–253 the chain is on the mitochondrial intermembrane side; that stretch reads NYELVKAQLCEHYRTPQASF. A helical membrane pass occupies residues 254–274; sequence TISFTAGAVSGAIAAVLTLPF. Residues 275-316 are Mitochondrial matrix-facing; it reads DVVKTRRQIQLGEMEALGAVSMKKPSSTWNMMRNIWIDMGYK. The helical transmembrane segment at 317 to 337 threads the bilayer; the sequence is GLFAGFLPRVIKVAPACAVMI. Residues 338-359 lie on the Mitochondrial intermembrane side of the membrane; it reads STYEFGKTFFQERNLHQARCGL.

Belongs to the mitochondrial carrier (TC 2.A.29) family. In terms of processing, cleaved and degraded by AFG3L2; degradation by AFG3L2 is regulated by the ability of SLC25A39 to bind iron-sulfur. In absence of mitochondrial glutathione, SLC25A39 binds iron-sulfur, preventing cleavage and degradation by AFG3L2. The presence of mitochondrial glutathione prevents iron-sulfur-binding to SLC25A39, promoting cleavage and degradation by AFG3L2.

The protein localises to the mitochondrion inner membrane. The enzyme catalyses glutathione(in) = glutathione(out). With respect to regulation, the activity of SLC25A39 is regulated by levels of mitochondrial glutathione via its ability to bind [2Fe-2S] iron-sulfur cluster. Upon physiological levels of mitochondrial glutathione, glutathione prevents iron-sulfur-binding to SLC25A39 promoting cleavage and degradation by AFG3L2. Upon depletion of mitochondrial glutathione, SLC25A39 binds iron-sulfur, preventing cleavage and degradation by AFG3L2. In terms of biological role, mitochondrial transporter required for glutathione import into mitochondria. Glutathione, which plays key roles in oxidative metabolism, is produced exclusively in the cytosol and is imported in many organelles. Mitochondrial glutathione is required for the activity and stability of proteins containing iron-sulfur clusters, as well as erythropoiesis. Involved in the early steps of heme biosynthesis. In Danio rerio (Zebrafish), this protein is Mitochondrial glutathione transporter SLC25A39 (slc25a39).